We begin with the raw amino-acid sequence, 494 residues long: Voltage-gated potassium channel regulatory subunit KCNF1 (494 aa).

The Cytoplasmic portion of the chain corresponds to 1 to 183 (MDGSGERSLP…KPESSCPARV (183 aa)). Residues 184-204 (VAVLSFLLILVSSVVMCMGTI) traverse the membrane as a helical segment. The helical transmembrane segment at 224-244 (NVETACIGWFTLEYLLRLFSS) threads the bilayer. Over 245-249 (PNKLH) the chain is Cytoplasmic. A helical membrane pass occupies residues 250–270 (FALSFMNIVDVLAILPFYVSL). A helical; Voltage-sensor membrane pass occupies residues 290 to 310 (QALRIMRIARIFKLARHSSGL). Residues 311–324 (QTLTYALKRSFKEL) are Cytoplasmic-facing. Residues 325–345 (GLLLMYLAVGIFVFSALGYTM) form a helical membrane-spanning segment. Residues 358–378 (PQSFWWAIITMTTVGYGDIYP) constitute an intramembrane region (pore-forming). The short motif at 370-375 (TVGYGD) is the Selectivity filter element. The helical transmembrane segment at 386-406 (NAAISFLCGVIAIALPIHPII) threads the bilayer. Residues 407 to 494 (NNFVRYYNKQ…HHRTRLQSCK (88 aa)) lie on the Cytoplasmic side of the membrane. The segment at 433–469 (NSSSGGEGKTGGSRSDLDNLPPEPAGKEAPSCSSRLK) is disordered.

This sequence belongs to the potassium channel family. F (TC 1.A.1.2) subfamily. Kv5.1/KCNF1 sub-subfamily. Heterotetramer with KCNB1 or KCNB2. As to expression, detected in heart, brain, liver, skeletal muscle, kidney and pancreas.

It is found in the cell membrane. Functionally, regulatory alpha-subunit of the voltage-gated potassium (Kv) channel which, when coassembled with KCNB1 or KCNB2, can modulate their expression and their gating kinetics by acting on deactivation upon repolarization and inactivation during maintained depolarization. Accelerates inactivation but has relatively little effect on deactivation. Coexpression with KCNB1 or KCNB2 markedly slows inactivation. Each modulatory subunit has its own specific properties of regulation, and can lead to extensive inhibitions, to large changes in kinetics, and/or to large shifts in the voltage dependencies of the inactivation process. The gating kinetics depends on the nature and stoichiometry of the associated regulatory sunbunit. Fails to produce a potassium current when expressed alone. This chain is Voltage-gated potassium channel regulatory subunit KCNF1, found in Homo sapiens (Human).